Here is a 181-residue protein sequence, read N- to C-terminus: NADH-quinone oxidoreductase subunit I (181 aa).

2 consecutive 4Fe-4S ferredoxin-type domains span residues 51-80 (TRNS…LKKS) and 90-119 (KSFQ…LTPD). Residues Cys-60, Cys-63, Cys-66, Cys-70, Cys-99, Cys-102, Cys-105, and Cys-109 each coordinate [4Fe-4S] cluster.

This sequence belongs to the complex I 23 kDa subunit family. As to quaternary structure, NDH-1 is composed of 13 different subunits. Subunits NuoA, H, J, K, L, M, N constitute the membrane sector of the complex. The cofactor is [4Fe-4S] cluster.

Its subcellular location is the cell membrane. It catalyses the reaction a quinone + NADH + 5 H(+)(in) = a quinol + NAD(+) + 4 H(+)(out). In terms of biological role, NDH-1 shuttles electrons from NADH, via FMN and iron-sulfur (Fe-S) centers, to quinones in the respiratory chain. The immediate electron acceptor for the enzyme in this species is believed to be ubiquinone. Couples the redox reaction to proton translocation (for every two electrons transferred, four hydrogen ions are translocated across the cytoplasmic membrane), and thus conserves the redox energy in a proton gradient. This Buchnera aphidicola subsp. Cinara cedri (strain Cc) protein is NADH-quinone oxidoreductase subunit I.